The chain runs to 557 residues: Leucine-rich glioma-inactivated protein 1 (557 aa).

Positions 1–34 (MESESSRRMGNACIPLKRIAYFLCLFSVVLLTEG) are cleaved as a signal peptide. An LRRNT domain is found at 35–72 (KKPAKPKCPAVCTCSKDNALCENARSIPRTVPPDVISL). LRR repeat units lie at residues 92 to 113 (SLQLLLFTSNSFDVISDDAFIG), 116 to 137 (HLEYLFIENNNIKSISRHTFRG), and 140 to 161 (SLIHLSLANNNLQTLPKDIFKG). One can recognise an LRRCT domain in the interval 173-223 (NAFNCDCKLKWLVEWLGHTNATVEDIYCEGPPEYKKRKINSLSPKDFDCII). The N-linked (GlcNAc...) asparagine glycan is linked to Asn-192. EAR repeat units follow at residues 225–267 (EFAK…EWDH), 271–313 (TFRN…KRDG), 317–364 (KFIK…KWNG), 366–415 (GFYS…QWSK), 419–462 (LFTN…KWGG), 464–506 (SFQD…NWDA), and 510–552 (KFVK…KHVI). Asn-277 is a glycosylation site (N-linked (GlcNAc...) asparagine). Asn-422 is a glycosylation site (N-linked (GlcNAc...) asparagine).

As to quaternary structure, oligomer. Interacts with KCNA1 within a complex containing KCNA1, KCNA4 and KCNAB1. Part of a complex containing ADAM22, DLG4/PSD95 and CACNG2 (stargazin). Can bind to ADAM11 and ADAM23. Glycosylated. Expressed in the brain (at protein level). Expressed in cerebellar cortex basket cell terminals (at protein level). Highly expressed in the dentate gyrus and CA3 field of the hippocampus.

Its subcellular location is the secreted. It localises to the synapse. It is found in the cytoplasm. The protein localises to the golgi apparatus. The protein resides in the endoplasmic reticulum. Functionally, regulates voltage-gated potassium channels assembled from KCNA1, KCNA4 and KCNAB1. It slows down channel inactivation by precluding channel closure mediated by the KCNAB1 subunit. Ligand for ADAM22 that positively regulates synaptic transmission mediated by AMPA-type glutamate receptors. Plays a role in suppressing the production of MMP1/3 through the phosphatidylinositol 3-kinase/ERK pathway. This Mus musculus (Mouse) protein is Leucine-rich glioma-inactivated protein 1.